Reading from the N-terminus, the 1326-residue chain is Probable serine/threonine-protein kinase gdt8 (1326 aa).

An N-terminal signal peptide occupies residues 1–22 (MINKILIKLITIIIFCFSFLFA). Topologically, residues 23–782 (EEDLIRTPPG…VDRNENLELK (760 aa)) are extracellular. Disordered regions lie at residues 419–467 (VDQN…GNQG) and 731–762 (EPPT…QTPI). Composition is skewed to low complexity over residues 422 to 460 (NNNN…NNNN) and 731 to 761 (EPPT…TQTP). Residues 783-803 (IALPICLSLALLIGIIIMICI) form a helical membrane-spanning segment. Residues 804-1326 (FKKVQSNSKL…TKEDKDLDEN (523 aa)) are Cytoplasmic-facing. The segment at 833-858 (IVSQPPTVIEEKPQDNSKPDDQKLIE) is disordered. Residues 841-858 (IEEKPQDNSKPDDQKLIE) show a composition bias toward basic and acidic residues. Residues 1036–1292 (IKTEQLIASY…FSEISLHLEI (257 aa)) form the Protein kinase domain. Residues 1042 to 1050 (IASYLPSKV) and Lys-1065 contribute to the ATP site. The active-site Proton acceptor is Asp-1158. A disordered region spans residues 1301–1326 (MNESEESTSNHNTNSKTKEDKDLDEN). Residues 1316–1326 (KTKEDKDLDEN) show a composition bias toward basic and acidic residues.

In the N-terminal section; belongs to the GDT family. It in the C-terminal section; belongs to the protein kinase superfamily. TKL Ser/Thr protein kinase family.

The protein resides in the membrane. It carries out the reaction L-seryl-[protein] + ATP = O-phospho-L-seryl-[protein] + ADP + H(+). It catalyses the reaction L-threonyl-[protein] + ATP = O-phospho-L-threonyl-[protein] + ADP + H(+). This is Probable serine/threonine-protein kinase gdt8 (gdt8) from Dictyostelium discoideum (Social amoeba).